We begin with the raw amino-acid sequence, 150 residues long: SsrA-binding protein (150 aa).

It belongs to the SmpB family.

The protein localises to the cytoplasm. Its function is as follows. Required for rescue of stalled ribosomes mediated by trans-translation. Binds to transfer-messenger RNA (tmRNA), required for stable association of tmRNA with ribosomes. tmRNA and SmpB together mimic tRNA shape, replacing the anticodon stem-loop with SmpB. tmRNA is encoded by the ssrA gene; the 2 termini fold to resemble tRNA(Ala) and it encodes a 'tag peptide', a short internal open reading frame. During trans-translation Ala-aminoacylated tmRNA acts like a tRNA, entering the A-site of stalled ribosomes, displacing the stalled mRNA. The ribosome then switches to translate the ORF on the tmRNA; the nascent peptide is terminated with the 'tag peptide' encoded by the tmRNA and targeted for degradation. The ribosome is freed to recommence translation, which seems to be the essential function of trans-translation. The sequence is that of SsrA-binding protein from Rubrobacter xylanophilus (strain DSM 9941 / JCM 11954 / NBRC 16129 / PRD-1).